The chain runs to 67 residues: MGEISITKLLVVAALVVLLFGTKKLRTLGGDLGTAIKGFKKAMNDEDVGVKKDVDGGVQAEKLSHKE.

The chain crosses the membrane as a helical span at residues 4–21 (ISITKLLVVAALVVLLFG).

Belongs to the TatA/E family. TatE subfamily.

It localises to the cell inner membrane. Functionally, part of the twin-arginine translocation (Tat) system that transports large folded proteins containing a characteristic twin-arginine motif in their signal peptide across membranes. TatE shares overlapping functions with TatA. The sequence is that of Probable Sec-independent protein translocase protein TatE from Salmonella arizonae (strain ATCC BAA-731 / CDC346-86 / RSK2980).